The sequence spans 530 residues: T-box transcription factor TBX21 (530 aa).

A disordered region spans residues 1 to 55; sequence MGIVEPGCGDMLTGTEPMPSDEGRGPGADQQHRFFYPEPGAQDPTDRRAGSSLGT. Serine 52 bears the Phosphoserine mark. Threonine 55 is modified (phosphothreonine). Phosphotyrosine is present on residues tyrosine 76 and tyrosine 117. Positions 140–325 form a DNA-binding region, T-box; the sequence is LSNHLLWSKF…NNPFAKGFRE (186 aa). Tyrosine 219 carries the post-translational modification Phosphotyrosine; by ABL1. The residue at position 224 (serine 224) is a Phosphoserine. Phosphotyrosine; by ABL1 is present on tyrosine 265. Threonine 302 is modified (phosphothreonine). Position 304 is a phosphotyrosine; by ABL1 (tyrosine 304). A Glycyl lysine isopeptide (Lys-Gly) (interchain with G-Cter in ubiquitin) cross-link involves residue lysine 313. Residues 444 to 530 form a disordered region; it reads AGWFRPMRTL…EGQFYNYFPN (87 aa). The segment covering 462–482 has biased composition (polar residues); the sequence is SEEQGSSPSLWPEVTSLQPEP. Residues 498 to 515 are compositionally biased toward low complexity; that stretch reads SPYPSSGDSSSPAGAPSP. A Phosphoserine modification is found at serine 508. Tyrosine 525 carries the phosphotyrosine; by ITK modification.

In terms of assembly, interacts with RUNX1 and RUNX3. Interacts with ITK. The phosphorylated form (at Tyr-525) interacts with GATA3. Interacts with ABL1. Interacts with RELA. The phosphorylated form (at Thr-302) interacts with NFATC2. Interacts with KDM6B. Interacts with SMARCA4 in a KDM6B-dependent manner. Interacts with CCTN1 and CDK9. Interacts with USP10. Post-translationally, phosphorylations at Ser-52, Tyr-76, Ser-224 and Ser-508 are regulated by mTORC1. Phosphorylation at Tyr-525 is essential for its interaction GATA3. Phosphorylation at Tyr-219, Tyr-265 and Tyr-304 enhances its transcriptional activator activity. Phosphorylation at Thr-302 is required for its interaction with NFATC2. In terms of processing, ubiquitinated at Lys-313, leading to its degradation by the proteasome. Ubiquitination is essential for controlling protein stability, binding to the T-box-binding element of the IFN-gamma promoter, and for interaction with NFATC2 through induction of phosphorylation at Thr-302. Deubiquitinated by USP10 leading to its stabilization. T-cell specific. Expressed in regulatory T (TReg) cells.

It is found in the nucleus. Its function is as follows. Lineage-defining transcription factor which initiates Th1 lineage development from naive Th precursor cells both by activating Th1 genetic programs and by repressing the opposing Th2 and Th17 genetic programs. Activates transcription of a set of genes important for Th1 cell function, including those encoding IFN-gamma and the chemokine receptor CXCR3. Activates IFNG and CXCR3 genes in part by recruiting chromatin remodeling complexes including KDM6B, a SMARCA4-containing SWI/SNF-complex, and an H3K4me2-methyltransferase complex to their promoters and all of these complexes serve to establish a more permissive chromatin state conducive with transcriptional activation. Can activate Th1 genes also via recruitment of Mediator complex and P-TEFb (composed of CDK9 and CCNT1/cyclin-T1) in the form of the super elongation complex (SEC) to super-enhancers and associated genes in activated Th1 cells. Inhibits the Th17 cell lineage commitment by blocking RUNX1-mediated transactivation of Th17 cell-specific transcriptinal regulator RORC. Inhibits the Th2 cell lineage commitment by suppressing the production of Th2 cytokines, such as IL-4, IL-5, and IL- 13, via repression of transcriptional regulators GATA3 and NFATC2. Protects Th1 cells from amplifying aberrant type-I IFN response in an IFN-gamma abundant microenvironment by acting as a repressor of type-I IFN transcription factors and type-I IFN- stimulated genes. Acts as a regulator of antiviral B-cell responses; controls chronic viral infection by promoting the antiviral antibody IgG2a isotype switching and via regulation of a broad antiviral gene expression program. The sequence is that of T-box transcription factor TBX21 (Tbx21) from Mus musculus (Mouse).